A 101-amino-acid chain; its full sequence is Small ribosomal subunit protein uS14A (101 aa).

The disordered stretch occupies residues 31 to 59; sequence IRSPASSPEQRVAAQSELNRQPRDASAVR.

It belongs to the universal ribosomal protein uS14 family. In terms of assembly, part of the 30S ribosomal subunit. Contacts proteins S3 and S10.

In terms of biological role, binds 16S rRNA, required for the assembly of 30S particles and may also be responsible for determining the conformation of the 16S rRNA at the A site. The chain is Small ribosomal subunit protein uS14A from Mycobacteroides abscessus (strain ATCC 19977 / DSM 44196 / CCUG 20993 / CIP 104536 / JCM 13569 / NCTC 13031 / TMC 1543 / L948) (Mycobacterium abscessus).